The sequence spans 638 residues: Neuroendocrine convertase 2 (638 aa).

The signal sequence occupies residues 1–25 (MKGGCVSQWKAAAGFLFCVMVFASA). A propeptide spanning residues 26–109 (ERPVFTNHFL…QQEGFDRKKR (84 aa)) is cleaved from the precursor. Residues 129 to 453 (QWYLINTGQA…YGVLDAGAMV (325 aa)) enclose the Peptidase S8 domain. Catalysis depends on charge relay system residues D167 and H208. 2 disulfides stabilise this stretch: C225-C376 and C317-C347. N375 carries an N-linked (GlcNAc...) asparagine glycan. S384 functions as the Charge relay system in the catalytic mechanism. In terms of domain architecture, P/Homo B spans 461–597 (TVPERFHCVG…TLMLHGTQSA (137 aa)). Cysteines 468 and 494 form a disulfide. Residues N514 and N524 are each glycosylated (N-linked (GlcNAc...) asparagine).

It belongs to the peptidase S8 family. Furin subfamily.

The protein resides in the cytoplasmic vesicle. The protein localises to the secretory vesicle. It localises to the secreted. The enzyme catalyses Release of protein hormones and neuropeptides from their precursors, generally by hydrolysis of -Lys-Arg-|- bonds.. Serine endopeptidase which is involved in the processing of hormone and other protein precursors at sites comprised of pairs of basic amino acid residues. Responsible for the release of glucagon from proglucagon in pancreatic A cells. The sequence is that of Neuroendocrine convertase 2 (PCSK2) from Homo sapiens (Human).